Here is a 992-residue protein sequence, read N- to C-terminus: Protein translocase subunit SecA (992 aa).

Residues Q86, 104–108, and D535 contribute to the ATP site; that span reads GEGKT. The tract at residues 885-910 is disordered; the sequence is IAGGSSEVEQTRKPQRRTVQQIGRND. C912, C914, C923, and H924 together coordinate Zn(2+). The disordered stretch occupies residues 965–992; that stretch reads IDNGTLPAASPKTPRGRQPQAVPRGKKR.

It belongs to the SecA family. As to quaternary structure, monomer and homodimer. Part of the essential Sec protein translocation apparatus which comprises SecA, SecYEG and auxiliary proteins SecDF. Other proteins may also be involved. The cofactor is Zn(2+).

The protein resides in the cell membrane. The protein localises to the cytoplasm. The enzyme catalyses ATP + H2O + cellular proteinSide 1 = ADP + phosphate + cellular proteinSide 2.. Functionally, part of the Sec protein translocase complex. Interacts with the SecYEG preprotein conducting channel. Has a central role in coupling the hydrolysis of ATP to the transfer of proteins into and across the cell membrane, serving as an ATP-driven molecular motor driving the stepwise translocation of polypeptide chains across the membrane. This chain is Protein translocase subunit SecA, found in Chloroflexus aggregans (strain MD-66 / DSM 9485).